The sequence spans 462 residues: Microspherule protein 1 (462 aa).

M1 carries the post-translational modification N-acetylmethionine. Positions 1–130 (MDKDSQGLLD…KSKQPLQVTK (130 aa)) are disordered. Phosphoserine is present on S22. The span at 43 to 55 (PKRRSSSRFIKRK) shows a compositional bias: basic residues. The span at 81–90 (SGRCSGSEPS) shows a compositional bias: low complexity. S102 carries the post-translational modification Phosphoserine. A Phosphothreonine modification is found at T103. Over residues 103-112 (TPVPPSPAPT) the composition is skewed to pro residues. S108 carries the post-translational modification Phosphoserine. Residues 113 to 123 (PGLTKRVKKSK) carry the Nuclear localization signal motif. N6-acetyllysine is present on residues K123 and K130. S282 bears the Phosphoserine mark. Residues 301 to 335 (LEHELTVADRRQKREIRQLEQELHKWQVLVDSITG) are a coiled coil. Residues 363 to 419 (ITLGRATKDNQIDVDLSLEGPAWKISRKQGVIKLKNNGDFFIANEGRRPIYIDGRPV) form the FHA domain. Residues 389–396 (RKQGVIKL) carry the UBR5-degron motif.

Component of the chromatin remodeling INO80 complex; specifically part of a complex module associated with the N-terminus of INO80. Component of some MLL1/MLL complex, at least composed of the core components KMT2A/MLL1, ASH2L, HCFC1, WDR5 and RBBP5, as well as the facultative components BACC1, CHD8, E2F6, HSP70, INO80C, KANSL1, LAS1L, MAX, MCRS1, MGA, KAT8/MOF, PELP1, PHF20, PRP31, RING2, RUVB1/TIP49A, RUVB2/TIP49B, SENP3, TAF1, TAF4, TAF6, TAF7, TAF9 and TEX10. Component of the NSL complex at least composed of MOF/KAT8, KANSL1, KANSL2, KANSL3, MCRS1, PHF20, OGT1/OGT, WDR5 and HCFC1. Interacts with NOP2. Interacts with PINX1. Interacts with TERT. Interacts with CCDC85B. Interacts with DAXX. Interacts (via N-terminus) with FMR1 (via phosphorylated form). Interacts with FXR1 and FXR2. Interacts (via C-terminus) with NDE1 (via C-terminus); phosphorylation of NDE1 inhibits the interaction. Interacts (via C-terminus) with ZNF375. Interacts (via C-terminus) with active GTP-bound RHEB (via N-terminus) under conditions of high amino acid concentration; the interaction promotes mTORC1 complex activation by RHEB. Interacts (via N-terminus) with the mTORC1 complex; the interaction ensures mTORC1 activation by RHEB. Interacts with DYNC1I1; the interaction is required for the proper distribution of centriolar satellites. Interacts with TTBK2; the interaction is required for recruitment of TTBK2 to the mother centriole. Interacts with KIF2A; the interaction occurs during mitosis and facilitates chromosome alignment. Ubiquitinated by UBR5 when not assembled in the INO80 complex, leading to its degradation: UBR5 recognizes and binds a degron that is not accessible when MCRS1 is part of the INO80 complex. In terms of processing, phosphorylated by AURKA on Ser-35 and/or Ser-36 during mitosis which is required for kinetochore fiber assembly and mitotic progression but not for spindle localization or for chromosome-induced microtuble aster formation. Also phosphorylated by AURKA on Ser-85 and/or Ser-87. Phosphorylated by TTK/MPS1 which enhances recruitment of KIF2A to the minus end of spindle microtubules and facilitates precise chromosome segregation.

The protein localises to the nucleus. It is found in the nucleolus. The protein resides in the cytoplasm. It localises to the cytoskeleton. Its subcellular location is the microtubule organizing center. The protein localises to the centrosome. It is found in the spindle pole. The protein resides in the chromosome. It localises to the centromere. Its subcellular location is the kinetochore. The protein localises to the lysosome. It is found in the centriolar satellite. Functionally, modulates the transcription repressor activity of DAXX by recruiting it to the nucleolus. As part of the NSL complex it may be involved in acetylation of nucleosomal histone H4 on several lysine residues. Putative regulatory component of the chromatin remodeling INO80 complex which is involved in transcriptional regulation, DNA replication and probably DNA repair. May also be an inhibitor of TERT telomerase activity. Binds to G-quadruplex structures in mRNA. Binds to RNA homomer poly(G) and poly(U). Maintains RHEB at the lysosome in its active GTP-bound form and prevents its interaction with the mTORC1 complex inhibitor TSC2, ensuring activation of the mTORC1 complex by RHEB. Stabilizes the minus ends of kinetochore fibers by protecting them from depolymerization, ensuring functional spindle assembly during mitosis. Following phosphorylation by TTK/MPS1, enhances recruitment of KIF2A to the minus ends of mitotic spindle microtubules which promotes chromosome alignment. Regulates the morphology of microtubule minus ends in mitotic spindle by maintaining them in a closed conformation characterized by the presence of an electron-dense cap. Regulates G2/M transition and spindle assembly during oocyte meiosis. Mediates histone modifications and transcriptional regulation in germinal vesicle oocytes which are required for meiotic progression. Also regulates microtubule nucleation and spindle assembly by activating aurora kinases during oocyte meiosis. Contributes to the establishment of centriolar satellites and also plays a role in primary cilium formation by recruiting TTBK2 to the mother centriole which is necessary for removal of the CP110 cap from the mother centriole, an early step in ciliogenesis. Required for epiblast development during early embryogenesis. Essential for cell viability. This Mus musculus (Mouse) protein is Microspherule protein 1 (Mcrs1).